Consider the following 344-residue polypeptide: Succinylglutamate desuccinylase (344 aa).

His63, Glu66, and His160 together coordinate Zn(2+). Glu224 is a catalytic residue.

This sequence belongs to the AspA/AstE family. Succinylglutamate desuccinylase subfamily. The cofactor is Zn(2+).

The enzyme catalyses N-succinyl-L-glutamate + H2O = L-glutamate + succinate. Its pathway is amino-acid degradation; L-arginine degradation via AST pathway; L-glutamate and succinate from L-arginine: step 5/5. In terms of biological role, transforms N(2)-succinylglutamate into succinate and glutamate. The sequence is that of Succinylglutamate desuccinylase from Shewanella sp. (strain W3-18-1).